We begin with the raw amino-acid sequence, 398 residues long: Queuine tRNA-ribosyltransferase (398 aa).

The active-site Proton acceptor is Asp102. Residues 102–106 (DSGGF), Asp156, Gln205, and Gly232 each bind substrate. Residues 263–269 (GVGTPED) are RNA binding. Residue Asp282 is the Nucleophile of the active site. Residues 287-291 (TRNAR) are RNA binding; important for wobble base 34 recognition. Zn(2+) contacts are provided by Cys320, Cys322, Cys325, and His362.

Belongs to the queuine tRNA-ribosyltransferase family. Homodimer. Within each dimer, one monomer is responsible for RNA recognition and catalysis, while the other monomer binds to the replacement base PreQ1. Zn(2+) is required as a cofactor.

The catalysed reaction is 7-aminomethyl-7-carbaguanine + guanosine(34) in tRNA = 7-aminomethyl-7-carbaguanosine(34) in tRNA + guanine. It participates in tRNA modification; tRNA-queuosine biosynthesis. Its function is as follows. Catalyzes the base-exchange of a guanine (G) residue with the queuine precursor 7-aminomethyl-7-deazaguanine (PreQ1) at position 34 (anticodon wobble position) in tRNAs with GU(N) anticodons (tRNA-Asp, -Asn, -His and -Tyr). Catalysis occurs through a double-displacement mechanism. The nucleophile active site attacks the C1' of nucleotide 34 to detach the guanine base from the RNA, forming a covalent enzyme-RNA intermediate. The proton acceptor active site deprotonates the incoming PreQ1, allowing a nucleophilic attack on the C1' of the ribose to form the product. After dissociation, two additional enzymatic reactions on the tRNA convert PreQ1 to queuine (Q), resulting in the hypermodified nucleoside queuosine (7-(((4,5-cis-dihydroxy-2-cyclopenten-1-yl)amino)methyl)-7-deazaguanosine). The sequence is that of Queuine tRNA-ribosyltransferase from Polaromonas sp. (strain JS666 / ATCC BAA-500).